The chain runs to 602 residues: MTNVPVSRLRNFCIIAHIDHGKSTLADRLLQDTATVASRDMQDQFLDNMELERERGITIKLQAARMKYTATDGNEYVLNLIDTPGHVDFSYEVSRSLQACEGALLVVDASQGVEAQTLANVYLALENDLEIIPVLNKVDLPGSDPEKIKKEIESIIGLDTSQAISCSAKTGLGVTDILQAVVERVPPPKDTLEQATQALIFDSYYDPYRGVIVYFRVTAGSISARDQILLMASKKSYELDEIGIMAPDQQKVNELHAGEVGYLAASIKAVSDARVGDTITLLNAPAADPLPGYTEAKPMVFCGLFPTDADQYPDLREALEKLQLSDAALKYEPETSSAMGFGFRCGFLGLLHMEIVQERLEREYDLDLIVTAPSVIYQVNMLNGEALMIDNPATLPDPQHRDSIEEPYVRMEIYAPNDYNGTLMGLCQDRRGEFVDMKYITTDRVTLIYEMPLAEVVTDFFDQMKSRTKGYASMEYHLIGYRKNDLVRLDVLINSDKADPLTTIVHRDKAYGVGRALVDKLKELIPRQQFKIPLQASIGSRIIASQNISALRKDVLAKCYGGDISRKKKLLQKQAKGKKRMKSMGKVDVPQEAFMAVLKLNS.

A tr-type G domain is found at 7 to 189 (SRLRNFCIIA…AVVERVPPPK (183 aa)). Residues 19–24 (DHGKST) and 136–139 (NKVD) contribute to the GTP site.

It belongs to the TRAFAC class translation factor GTPase superfamily. Classic translation factor GTPase family. LepA subfamily.

It localises to the cell inner membrane. The enzyme catalyses GTP + H2O = GDP + phosphate + H(+). Required for accurate and efficient protein synthesis under certain stress conditions. May act as a fidelity factor of the translation reaction, by catalyzing a one-codon backward translocation of tRNAs on improperly translocated ribosomes. Back-translocation proceeds from a post-translocation (POST) complex to a pre-translocation (PRE) complex, thus giving elongation factor G a second chance to translocate the tRNAs correctly. Binds to ribosomes in a GTP-dependent manner. The protein is Elongation factor 4 of Prochlorococcus marinus (strain MIT 9211).